We begin with the raw amino-acid sequence, 1040 residues long: MQVLPPSSTGGPSRLFIMRPVATTLLMVAILLAGIIGYRALPVSALPEVDYPTIQVVTLYPGASPDVMTSAVTAPLERQFGQMSGLKQMSSQSSGGASVITLQFQLTLPLDVAEQEVQAAINAATNLLPSDLPNPPVYSKVNPADPPIMTLAVTSTAMPMTQVEDMVETRVAQKISQISGVGLVTLSGGQRPAVRVKLNAQAIAALGLTSETVRTAITGANVNSAKGSLDGPSRAVTLSANDQMQSAEEYRQLIIAYQNGAPIRLGDVATVEQGAENSWLGAWANKEQAIVMNVQRQPGANIISTADSIRQMLPQLTESLPKSVKVTVLSDRTTNIRASVDDTQFELMMAIALVVMIIYLFLRNIPATIIPGVAVPLSLIGTFAVMVFLDFSINNLTLMALTIATGFVVDDAIVVIENISRYIEKGEKPLAAALKGAGEIGFTIISLTFSLIAVLIPLLFMGDIVGRLFREFAITLAVAILISAVVSLTLTPMMCARMLSQESLRKQNRFSRASEKMFDRIIAAYGQGLAKVLNHPWLTLSVALSTLLLSVLLWVFIPKGFFPVQDNGIIQGTLQAPQSSSFANMAQRQRQVADVILQDPAVQSLTSFVGVDGTNPSLNSARLQINLKPLEERDDRVQKVIARLQTAVDKVPGVDLFLQPTQDLTIDTQVSRTQYQFTLQATSLDALSTWVPQLMEKLQQLPQLSDVSSDWQDKGLVAYVNVDRDSASRLGISMADVDNALYNAFGQRLISTIYTQANQYRVVLEHNTENTPGLAALDTIRLTSSDGGVVPLSSIAKIEQRFAPLSINHLDQFPVTTISFNVPDNYSLGDAVQAIMDTEKTLNLPVDITTQFQGSTLAFQSALGSTVWLIVAAVVAMYIVLGILYESFIHPITILSTLPTAGVGALLALMIAGSELDVIAIIGIILLIGIVKKNAIMMIDFALAAEREQGMSPRDAIYQACLLRFRPILMTTLAALLGALPLMLSTGVGAELRRPLGIGMVGGLIVSQVLTLFTTPVIYLLFDRLALWTKSRFARHEEEA.

12 helical membrane-spanning segments follow: residues 16–36 (FIMR…AGII), 347–367 (LMMA…NIPA), 369–389 (IIPG…MVFL), 396–416 (LTLM…IVVI), 440–460 (IGFT…PLLF), 472–492 (FAIT…TLTP), 537–557 (WLTL…WVFI), 863–883 (LGST…VLGI), 888–908 (FIHP…ALLA), 911–931 (IAGS…IGIV), 968–988 (ILMT…STGV), and 998–1018 (IGMV…TPVI).

This sequence belongs to the resistance-nodulation-cell division (RND) (TC 2.A.6) family. MdtB subfamily. Part of a tripartite efflux system composed of MdtA, MdtB and MdtC. MdtB forms a heteromultimer with MdtC.

The protein resides in the cell inner membrane. In terms of biological role, the MdtABC tripartite complex confers resistance against novobiocin and deoxycholate. This Escherichia coli (strain 55989 / EAEC) protein is Multidrug resistance protein MdtB.